Here is a 358-residue protein sequence, read N- to C-terminus: Presenilin hop-1 (358 aa).

The Cytoplasmic portion of the chain corresponds to 1–12 (MPRTKRVYSGKT). A helical membrane pass occupies residues 13 to 33 (ITGVLYPVAICMLFVAINVKL). Residues 34-57 (SQPEQQEQSKVVYGLFHSYDTADS) lie on the Lumenal side of the membrane. The chain crosses the membrane as a helical span at residues 58-78 (GTITLYLIGFLILTTSLGVFC). The Cytoplasmic portion of the chain corresponds to 79–86 (YQMKFYKA). The chain crosses the membrane as a helical span at residues 87–107 (IKVYVLANSIGILLVYSVFHF). Over 108 to 115 (QRIAEAQS) the chain is Lumenal. Residues 116–136 (IPVSVPTFFFLILQFGGLGIT) form a helical membrane-spanning segment. The Cytoplasmic segment spans residues 137-148 (CLHWKSHRRLHQ). The helical transmembrane segment at 149–169 (FYLIMLAGLTAIFILNILPDW) threads the bilayer. Residue Thr170 is a topological domain, lumenal. Residues 171 to 191 (VWMALTAISFWDIVAVLTPCG) traverse the membrane as a helical segment. Asp182 is a catalytic residue. Topologically, residues 192 to 273 (PLKMLVETAN…EVREVEGTIR (82 aa)) are cytoplasmic. The span at 221–240 (EVDSPDTTRSNSTPLTEFNN) shows a compositional bias: polar residues. Residues 221–242 (EVDSPDTTRSNSTPLTEFNNSS) are disordered. The chain crosses the membrane as a helical span at residues 274–294 (LGMGDFVFYSLMLGNTVQTCP). Residue Asp278 is part of the active site. The Lumenal segment spans residues 295 to 297 (LPT). The helical transmembrane segment at 298–318 (VVACFVSNLVGLTITLPIVTL) threads the bilayer. At 319–321 (SQT) the chain is on the cytoplasmic side. The segment at residues 322–342 (ALPALPFPLAIAAIFYFSSHI) is an intramembrane region (helical). The PAL motif lies at 324–326 (PAL). At 343–358 (ALTPFTDLCTSQLILI) the chain is on the cytoplasmic side.

Belongs to the peptidase A22A family. As to quaternary structure, homodimer. Component of the gamma-secretase complex, a complex probably composed of the presenilin homodimer (sel-12, hop-1 or spe-4), nicastrin (aph-2), aph-1 and pen-2. As to expression, weakly expressed.

Its subcellular location is the endoplasmic reticulum membrane. It is found in the golgi apparatus membrane. Functionally, probable catalytic subunit of the gamma-secretase complex, an endoprotease complex that catalyzes the intramembrane cleavage of integral membrane proteins such as Notch receptors (lin-12 or glp-1). Probably works redundantly of lin-12, which provides more presenilin function. The protein is Presenilin hop-1 (hop-1) of Caenorhabditis elegans.